An 84-amino-acid chain; its full sequence is MSRFCLLFVAFGFVLYFLHMEVTGKRTREDILKEAEQKGPEIKAMILENVQKCKTNCALHLKYEKCNELVPECCPKETPKCKSV.

Residues 1 to 24 (MSRFCLLFVAFGFVLYFLHMEVTG) form the signal peptide.

The protein belongs to the scoloptoxin-10 family. Post-translationally, contains 3 disulfide bonds. Expressed by the venom gland.

Its subcellular location is the secreted. The chain is U-scoloptoxin(10)-Er1a from Ethmostigmus rubripes (Giant centipede).